The primary structure comprises 397 residues: Acetate kinase (397 aa).

Asn-7 serves as a coordination point for Mg(2+). Lys-14 is an ATP binding site. A substrate-binding site is contributed by Arg-90. Asp-147 functions as the Proton donor/acceptor in the catalytic mechanism. ATP contacts are provided by residues 207-211 (HLGNG), 282-284 (DFR), and 330-334 (GIGEN). Glu-384 provides a ligand contact to Mg(2+).

The protein belongs to the acetokinase family. Homodimer. It depends on Mg(2+) as a cofactor. Mn(2+) is required as a cofactor.

Its subcellular location is the cytoplasm. It carries out the reaction acetate + ATP = acetyl phosphate + ADP. Its pathway is metabolic intermediate biosynthesis; acetyl-CoA biosynthesis; acetyl-CoA from acetate: step 1/2. Catalyzes the formation of acetyl phosphate from acetate and ATP. Can also catalyze the reverse reaction. The sequence is that of Acetate kinase from Agathobacter rectalis (strain ATCC 33656 / DSM 3377 / JCM 17463 / KCTC 5835 / VPI 0990) (Eubacterium rectale).